Here is a 247-residue protein sequence, read N- to C-terminus: Carboxy-S-adenosyl-L-methionine synthase (247 aa).

Residues tyrosine 40, 65-67 (GAS), 90-91 (DN), 122-123 (DI), asparagine 137, and arginine 204 contribute to the S-adenosyl-L-methionine site.

The protein belongs to the class I-like SAM-binding methyltransferase superfamily. Cx-SAM synthase family. Homodimer.

It carries out the reaction prephenate + S-adenosyl-L-methionine = carboxy-S-adenosyl-L-methionine + 3-phenylpyruvate + H2O. In terms of biological role, catalyzes the conversion of S-adenosyl-L-methionine (SAM) to carboxy-S-adenosyl-L-methionine (Cx-SAM). The chain is Carboxy-S-adenosyl-L-methionine synthase from Pseudomonas putida (strain GB-1).